Consider the following 500-residue polypeptide: Putative DNA recombinase (500 aa).

The 144-residue stretch at 1 to 144 folds into the Resolvase/invertase-type recombinase catalytic domain; it reads MIAIYVRVST…SGRLQKMKKG (144 aa). S9 serves as the catalytic O-(5'-phospho-DNA)-serine intermediate. Positions 152–288 form a DNA-binding region, recombinase; it reads LYGYKFVKEK…QELLGQSKRK (137 aa). The stretch at 372–448 forms a coiled coil; sequence KEAEQSNHLS…IQSKMKVLDD (77 aa).

This sequence in the N-terminal section; belongs to the site-specific recombinase resolvase family.

Functionally, putative site-specific recombinase having a very important role in sporulation. It probably plays a role in the recombination of SpoIIIC and SpoIVCB to form sigma K factor. The chain is Putative DNA recombinase (cisA) from Bacillus subtilis (strain 168).